The primary structure comprises 264 residues: 3-methyl-2-oxobutanoate hydroxymethyltransferase (264 aa).

Residues Asp-45 and Asp-84 each contribute to the Mg(2+) site. 3-methyl-2-oxobutanoate contacts are provided by residues 45-46 (DS), Asp-84, and Lys-112. Glu-114 is a binding site for Mg(2+). The active-site Proton acceptor is the Glu-181.

Belongs to the PanB family. In terms of assembly, homodecamer; pentamer of dimers. It depends on Mg(2+) as a cofactor.

It localises to the cytoplasm. It catalyses the reaction 3-methyl-2-oxobutanoate + (6R)-5,10-methylene-5,6,7,8-tetrahydrofolate + H2O = 2-dehydropantoate + (6S)-5,6,7,8-tetrahydrofolate. It functions in the pathway cofactor biosynthesis; (R)-pantothenate biosynthesis; (R)-pantoate from 3-methyl-2-oxobutanoate: step 1/2. Functionally, catalyzes the reversible reaction in which hydroxymethyl group from 5,10-methylenetetrahydrofolate is transferred onto alpha-ketoisovalerate to form ketopantoate. This is 3-methyl-2-oxobutanoate hydroxymethyltransferase from Escherichia coli O81 (strain ED1a).